A 173-amino-acid polypeptide reads, in one-letter code: MASRKTKKKEGGALRAQRASSNVFSNFEQTQIQEFKEAFTLMDQNRDGFIDKEDLKDTYASLGKTNVKDDELDAMLKEASGPINFTMFLNLFGEKLSGTDAEETILNAFKMLDPDGKGKINKEYIKRLLMSQADKMTAEEVDQMFQFASIDVAGNLDYKALSYVITHGEEKEE.

The segment at 1-20 is disordered; that stretch reads MASRKTKKKEGGALRAQRAS. 3 consecutive EF-hand domains span residues 30 to 65, 100 to 135, and 136 to 171; these read TQIQEFKEAFTLMDQNRDGFIDKEDLKDTYASLGKT, DAEETILNAFKMLDPDGKGKINKEYIKRLLMSQADK, and MTAEEVDQMFQFASIDVAGNLDYKALSYVITHGEEK. Ca(2+) contacts are provided by Asp-43, Asn-45, Asp-47, and Asp-54.

In terms of assembly, myosin is a hexamer of 2 heavy chains and 4 light chains. Expressed in fetal skeletal muscle and retina.

This chain is Myosin light chain 5 (MYL5), found in Homo sapiens (Human).